A 449-amino-acid chain; its full sequence is Polyadenylation factor subunit 2 (449 aa).

WD repeat units lie at residues 77 to 116 (KVKHVIPAITWTPEGRRLVVATYSGEFSLWNGSSFNFESI), 119 to 158 (AHDSAVTVMQYSHAGDWLISGDADGTIKIWQPNFNMVKVL), 161 to 200 (AHTECMRDISFSYSDQKFVTCSDDNVLKIWNFSNGQQERV), 203 to 242 (GHHWDVKSCDWHPKMGLIVSGSKDNLIKLWDPRTGRNVST), 245 to 285 (GLKH…RELQ), 288 to 328 (RDDM…SNST), and 337 to 376 (AHEKSVTSLAYSPVGHILASAAKDRTIRFWARSRPVDPNA). The segment at 411–432 (LPPANETNLGTPQPSILGSESI) is disordered. Over residues 415-432 (NETNLGTPQPSILGSESI) the composition is skewed to polar residues.

It is found in the nucleus. In terms of biological role, required for 3'-end cleavage and polyadenylation of pre-mRNAs. Also involved in chromosome segregation where it has a role in chromosome attachment to the mitotic spindle. In Eremothecium gossypii (strain ATCC 10895 / CBS 109.51 / FGSC 9923 / NRRL Y-1056) (Yeast), this protein is Polyadenylation factor subunit 2 (PSF2).